A 341-amino-acid polypeptide reads, in one-letter code: Enduracididine beta-hydroxylase (341 aa).

Histidine 146 and glutamate 148 together coordinate Fe cation. A disordered region spans residues histidine 203 to arginine 223. A Fe cation-binding site is contributed by histidine 300.

Belongs to the clavaminate synthase family. The cofactor is Fe(2+).

The catalysed reaction is L-enduracididine + 2-oxoglutarate + O2 = (3S)-3-hydroxy-L-enduracididine + succinate + CO2. It functions in the pathway antibiotic biosynthesis. Functionally, hydroxylates the beta carbon of free L-enduracididine to produce (3S)-3-hydroxy-L-enduracididine in biosynthesis of the nonproteinogenic amino acid beta-hydroxyenduracididine, a component of antibiotic mannopeptimycin. The polypeptide is Enduracididine beta-hydroxylase (mppO) (Streptomyces hygroscopicus).